We begin with the raw amino-acid sequence, 360 residues long: 3-dehydroquinate synthase (360 aa).

NAD(+)-binding positions include 104–108 (GVIGD), 128–129 (TT), K141, and 168–171 (FLDT). E183, H243, and H260 together coordinate Zn(2+).

Belongs to the sugar phosphate cyclases superfamily. Dehydroquinate synthase family. Co(2+) serves as cofactor. Zn(2+) is required as a cofactor. It depends on NAD(+) as a cofactor.

It localises to the cytoplasm. It catalyses the reaction 7-phospho-2-dehydro-3-deoxy-D-arabino-heptonate = 3-dehydroquinate + phosphate. The protein operates within metabolic intermediate biosynthesis; chorismate biosynthesis; chorismate from D-erythrose 4-phosphate and phosphoenolpyruvate: step 2/7. In terms of biological role, catalyzes the conversion of 3-deoxy-D-arabino-heptulosonate 7-phosphate (DAHP) to dehydroquinate (DHQ). This is 3-dehydroquinate synthase from Streptococcus equi subsp. equi (strain 4047).